The chain runs to 210 residues: MSGLFITLEGPEGAGKSTNRDYLAARLREHGLDVVLTREPGGTPLAEKVRELLLTPSDEGMAADTELLLVFAARAQHLAQVIRPALARGAVVLCDRFTDATYAYQGGGRGLSVERIAVLEQFVQGDLRPDLTLVFDLPVEVGLARAAARGRLDRFEQEGQAFFEAVRQAYLQRAQGAPQRYSLLDAAQSLEAVQRDIDALLPGILERCRG.

10–17 contacts ATP; it reads GPEGAGKS.

Belongs to the thymidylate kinase family.

The enzyme catalyses dTMP + ATP = dTDP + ADP. Phosphorylation of dTMP to form dTDP in both de novo and salvage pathways of dTTP synthesis. The chain is Thymidylate kinase from Pseudomonas putida (strain ATCC 700007 / DSM 6899 / JCM 31910 / BCRC 17059 / LMG 24140 / F1).